We begin with the raw amino-acid sequence, 421 residues long: Forkhead box protein fkh-4 (421 aa).

Residues 118 to 218 constitute a DNA-binding region (fork-head); that stretch reads RPPISYVALC…SDADFDFFRK (101 aa).

Its subcellular location is the nucleus. Functionally, transcription factor. Regulates expression of a class of small RNAs, known as 21U-RNAs, perhaps acting redundantly with fkh-3 and fkh-5. In Caenorhabditis elegans, this protein is Forkhead box protein fkh-4.